We begin with the raw amino-acid sequence, 319 residues long: Acetyl-coenzyme A carboxylase carboxyl transferase subunit alpha (319 aa).

Positions E31–E292 constitute a CoA carboxyltransferase C-terminal domain.

Belongs to the AccA family. Acetyl-CoA carboxylase is a heterohexamer composed of biotin carboxyl carrier protein (AccB), biotin carboxylase (AccC) and two subunits each of ACCase subunit alpha (AccA) and ACCase subunit beta (AccD).

The protein localises to the cytoplasm. It catalyses the reaction N(6)-carboxybiotinyl-L-lysyl-[protein] + acetyl-CoA = N(6)-biotinyl-L-lysyl-[protein] + malonyl-CoA. It participates in lipid metabolism; malonyl-CoA biosynthesis; malonyl-CoA from acetyl-CoA: step 1/1. In terms of biological role, component of the acetyl coenzyme A carboxylase (ACC) complex. First, biotin carboxylase catalyzes the carboxylation of biotin on its carrier protein (BCCP) and then the CO(2) group is transferred by the carboxyltransferase to acetyl-CoA to form malonyl-CoA. This Rhodopirellula baltica (strain DSM 10527 / NCIMB 13988 / SH1) protein is Acetyl-coenzyme A carboxylase carboxyl transferase subunit alpha.